Reading from the N-terminus, the 218-residue chain is Large ribosomal subunit protein uL3 (218 aa).

Positions 133 to 158 (RGQGASHGAQAVHRRPGSIGGCATPG) are disordered.

The protein belongs to the universal ribosomal protein uL3 family. As to quaternary structure, part of the 50S ribosomal subunit. Forms a cluster with proteins L14 and L19.

In terms of biological role, one of the primary rRNA binding proteins, it binds directly near the 3'-end of the 23S rRNA, where it nucleates assembly of the 50S subunit. In Mycolicibacterium vanbaalenii (strain DSM 7251 / JCM 13017 / BCRC 16820 / KCTC 9966 / NRRL B-24157 / PYR-1) (Mycobacterium vanbaalenii), this protein is Large ribosomal subunit protein uL3.